The primary structure comprises 809 residues: Zinc finger CCCH domain-containing protein 24 (809 aa).

Residue Met1 is modified to N-acetylmethionine. The tract at residues 1–74 (METSSIEINE…NLESSDTKIT (74 aa)) is disordered. The span at 30 to 46 (ETSSIDELPSSDSNATD) shows a compositional bias: polar residues. Over residues 51–65 (VGEKRKRADEDEKTN) the composition is skewed to basic and acidic residues. The C3H1-type zinc-finger motif lies at 79–107 (WWKTSLCSYFRREASCSHGNECKYAHGEA). S-adenosyl-L-methionine-binding residues include Gln536 and Glu586. The disordered stretch occupies residues 652-693 (EEMTNSEHVADQNLPPSNTQVEELQDNEQKDSSSLEPEKTTK). Residues 678–692 (NEQKDSSSLEPEKTT) are compositionally biased toward basic and acidic residues. Residue Asp704 coordinates S-adenosyl-L-methionine. The active-site Nucleophile is the Cys732.

It belongs to the class I-like SAM-binding methyltransferase superfamily. RNA M5U methyltransferase family.

This chain is Zinc finger CCCH domain-containing protein 24, found in Arabidopsis thaliana (Mouse-ear cress).